A 165-amino-acid polypeptide reads, in one-letter code: Deoxyuridine 5'-triphosphate nucleotidohydrolase (165 aa).

Substrate is bound by residues 66–68 (RSG), Asn79, 83–85 (TVD), and Lys93. Positions 134–165 (ETSRGAGGHGSSGGHASLTPGARSAARVAQEG) are disordered.

This sequence belongs to the dUTPase family. Mg(2+) serves as cofactor.

It carries out the reaction dUTP + H2O = dUMP + diphosphate + H(+). It participates in pyrimidine metabolism; dUMP biosynthesis; dUMP from dCTP (dUTP route): step 2/2. Its function is as follows. This enzyme is involved in nucleotide metabolism: it produces dUMP, the immediate precursor of thymidine nucleotides and it decreases the intracellular concentration of dUTP so that uracil cannot be incorporated into DNA. This Nocardia farcinica (strain IFM 10152) protein is Deoxyuridine 5'-triphosphate nucleotidohydrolase.